Consider the following 123-residue polypeptide: Small ribosomal subunit protein uS12c (123 aa).

Positions 1-16 (MPTIQQLIRNSRQPAE) are enriched in polar residues. Positions 1–23 (MPTIQQLIRNSRQPAENRTKSPA) are disordered.

It belongs to the universal ribosomal protein uS12 family. As to quaternary structure, part of the 30S ribosomal subunit.

The protein resides in the plastid. It is found in the chloroplast. Functionally, with S4 and S5 plays an important role in translational accuracy. Located at the interface of the 30S and 50S subunits. The chain is Small ribosomal subunit protein uS12c (rps12) from Staurastrum punctulatum (Green alga).